The chain runs to 265 residues: Polyphosphate glucokinase (265 aa).

Polar residues predominate over residues 1–18 (MTSTGPETSETPGATTQR). Residues 1–22 (MTSTGPETSETPGATTQRHGFG) are disordered. ATP is bound at residue 24–29 (DVGGSG).

Belongs to the ROK (NagC/XylR) family. Homodimer.

The catalysed reaction is [phosphate](n) + D-glucose = [phosphate](n-1) + D-glucose 6-phosphate + H(+). It carries out the reaction D-glucose + ATP = D-glucose 6-phosphate + ADP + H(+). Its function is as follows. Catalyzes the phosphorylation of glucose using polyphosphate or ATP as the phosphoryl donor. Polyphosphate, rather than ATP, seems to be the major phosphate donor for the enzyme in M.tuberculosis. The sequence is that of Polyphosphate glucokinase (ppgK) from Mycobacterium tuberculosis (strain CDC 1551 / Oshkosh).